Consider the following 204-residue polypeptide: MFAFLRGELVTASREEAVVEVSGIGYRLHISSGTSSRLPVPGSPVFLYTHYHVREDLQQLFGFLDEEELQLFRLLLSISGVGPKLAIAVLSGLSVGEIQEAIVSNRPETLFGISGVGRKTAARIILELRDKILKIQPTSSAKAGAPSAVLSATQLIDDAVAALTTLGFPKASAQKAVSKVLETTPGLSVEELVRTSLAAMHNNL.

The tract at residues 1 to 64 is domain I; the sequence is MFAFLRGELV…EDLQQLFGFL (64 aa). The interval 65–143 is domain II; sequence DEEELQLFRL…KIQPTSSAKA (79 aa). Positions 144–151 are flexible linker; sequence GAPSAVLS. Residues 151 to 204 are domain III; that stretch reads SATQLIDDAVAALTTLGFPKASAQKAVSKVLETTPGLSVEELVRTSLAAMHNNL.

It belongs to the RuvA family. In terms of assembly, homotetramer. Forms an RuvA(8)-RuvB(12)-Holliday junction (HJ) complex. HJ DNA is sandwiched between 2 RuvA tetramers; dsDNA enters through RuvA and exits via RuvB. An RuvB hexamer assembles on each DNA strand where it exits the tetramer. Each RuvB hexamer is contacted by two RuvA subunits (via domain III) on 2 adjacent RuvB subunits; this complex drives branch migration. In the full resolvosome a probable DNA-RuvA(4)-RuvB(12)-RuvC(2) complex forms which resolves the HJ.

It localises to the cytoplasm. Its function is as follows. The RuvA-RuvB-RuvC complex processes Holliday junction (HJ) DNA during genetic recombination and DNA repair, while the RuvA-RuvB complex plays an important role in the rescue of blocked DNA replication forks via replication fork reversal (RFR). RuvA specifically binds to HJ cruciform DNA, conferring on it an open structure. The RuvB hexamer acts as an ATP-dependent pump, pulling dsDNA into and through the RuvAB complex. HJ branch migration allows RuvC to scan DNA until it finds its consensus sequence, where it cleaves and resolves the cruciform DNA. In Chlorobaculum parvum (strain DSM 263 / NCIMB 8327) (Chlorobium vibrioforme subsp. thiosulfatophilum), this protein is Holliday junction branch migration complex subunit RuvA.